Reading from the N-terminus, the 427-residue chain is Succinate--CoA ligase [ADP-forming] subunit beta, mitochondrial (427 aa).

Residues 1–30 (MYSRKSLSLISKCGQLSRLNAQAALQARRH) constitute a mitochondrion transit peptide. Residues 39-284 (AQLLREYGIG…LSQEDPDEVK (246 aa)) form the ATP-grasp domain. ATP-binding positions include Lys-76 and 83-85 (GRG). Position 102 is a phosphoserine (Ser-102). Glu-144 is an ATP binding site. Mg(2+)-binding residues include Asn-236 and Asp-253. Phosphoserine is present on residues Ser-263 and Ser-276. Substrate-binding positions include Asn-304 and 361–363 (GIV).

The protein belongs to the succinate/malate CoA ligase beta subunit family. Heterodimer of an alpha and a beta subunit. The cofactor is Mg(2+).

The protein resides in the mitochondrion. The catalysed reaction is succinate + ATP + CoA = succinyl-CoA + ADP + phosphate. Its pathway is carbohydrate metabolism; tricarboxylic acid cycle; succinate from succinyl-CoA (ligase route): step 1/1. Succinyl-CoA synthetase functions in the citric acid cycle (TCA), coupling the hydrolysis of succinyl-CoA to the synthesis of ATP and thus represents the only step of substrate-level phosphorylation in the TCA. The beta subunit provides nucleotide specificity of the enzyme and binds the substrate succinate, while the binding sites for coenzyme A and phosphate are found in the alpha subunit. In Saccharomyces cerevisiae (strain ATCC 204508 / S288c) (Baker's yeast), this protein is Succinate--CoA ligase [ADP-forming] subunit beta, mitochondrial.